The primary structure comprises 591 residues: Monoterpene synthase 8, chloroplastic (591 aa).

Residues 1–46 constitute a chloroplast transit peptide; it reads MSLLLAPPSYFPFRGLRRSTAAKQPPCLRLVKCTADRQSPEAARRS. Residues aspartate 346, aspartate 350, and glutamate 497 each coordinate Mg(2+). A DDXXD motif motif is present at residues 346–350; sequence DDVYD.

Belongs to the terpene synthase family. Tpsa subfamily. Mg(2+) is required as a cofactor. Requires Mn(2+) as cofactor. As to expression, highly expressed in flowers, petals and sepals, but almost undetectable in vegetative organs.

It localises to the plastid. The protein resides in the chloroplast. The enzyme catalyses (2E)-geranyl diphosphate + H2O = (R)-linalool + diphosphate. The catalysed reaction is (2E)-geranyl diphosphate + H2O = (S)-linalool + diphosphate. It carries out the reaction (2E,6E)-farnesyl diphosphate = (S)-beta-bisabolene + diphosphate. It catalyses the reaction (2E,6E)-farnesyl diphosphate = (E,R)-alpha-bisabolene + diphosphate. The enzyme catalyses (2E,6E)-farnesyl diphosphate = (E)-beta-farnesene + diphosphate. The catalysed reaction is (2E,6E)-farnesyl diphosphate = beta-sesquiphellandrene + diphosphate. It carries out the reaction (2E,6E)-farnesyl diphosphate = (1S,5S,6R)-alpha-bergamotene + diphosphate. It participates in secondary metabolite biosynthesis; terpenoid biosynthesis. Functionally, sesquiterpene and monoterpene synthase involved in the biosynthesis of volatile compounds present in floral scent. Mediates the conversion of (2E)-geranyl diphosphate (GPP) into linalool, with trace levels of myrcene, limonene and (Z)-beta-ocimene. Also acts as a sesquiterpene synthase by catalyzing the conversion of farnesyl diphosphate (FPP) to alpha-bergamotene and beta-bisabolene and to minor products including alpha-curcumene, cis-alpha-bisabolene, beta-farnesene and beta-sesquiphellandrene, as well as seven other unidentified sesquiterpenes. The protein is Monoterpene synthase 8, chloroplastic of Hedychium coronarium (White butterfly ginger-lily).